The following is a 323-amino-acid chain: MISTTSLFAPVDQDLRLLTDNLKRLVGARHPILGAAAEHLFEAGGKRVRPAIVLLVSRATLLDQELTARHRRLAEITEMIHTASLVHDDVVDEADLRRNVPTVNSLFDNRVAVLAGDFLFAQSSWYLANLDNLEVVKLLSEVIRDFAEGEILQSINRFDTDTDLETYLEKSYFKTASLIANSAKAAGVLSDAPRDVCDHLYEYGKHLGLAFQIVDDILDFTSPTEVLGKPAGSDLISGNITAPALFAMEKYPLLGKLIEREFAQAGDLEQALELVEQGDGIRRSRELAANQAQLARQHLSVLEMSAPRESLLELVDYVLGRLH.

3 residues coordinate isopentenyl diphosphate: Lys46, Arg49, and His81. The Mg(2+) site is built by Asp88 and Asp92. Arg97 is a binding site for an all-trans-polyprenyl diphosphate. Arg98 is an isopentenyl diphosphate binding site. An all-trans-polyprenyl diphosphate contacts are provided by Lys174, Thr175, and Gln212.

The protein belongs to the FPP/GGPP synthase family. The cofactor is Mg(2+).

Its function is as follows. Possible role in synthesis of the nonaprenyl side chain of plastoquinone or in synthesis of other prenyl chains such as undekaprenyl pyrophosphate. This chain is Prenyl transferase (preA), found in Synechocystis sp. (strain ATCC 27184 / PCC 6803 / Kazusa).